The primary structure comprises 233 residues: Probable transglycosylase IsaA (233 aa).

An N-terminal signal peptide occupies residues Met1–Ala29.

This sequence belongs to the transglycosylase family. IsaA subfamily.

The protein localises to the secreted. Is able to cleave peptidoglycan. This Staphylococcus aureus (strain USA300) protein is Probable transglycosylase IsaA (isaA).